A 159-amino-acid polypeptide reads, in one-letter code: Ribosomal RNA large subunit methyltransferase H (159 aa).

Glycine 108 is a binding site for S-adenosyl-L-methionine.

The protein belongs to the RNA methyltransferase RlmH family. In terms of assembly, homodimer.

It is found in the cytoplasm. The enzyme catalyses pseudouridine(1915) in 23S rRNA + S-adenosyl-L-methionine = N(3)-methylpseudouridine(1915) in 23S rRNA + S-adenosyl-L-homocysteine + H(+). Functionally, specifically methylates the pseudouridine at position 1915 (m3Psi1915) in 23S rRNA. The protein is Ribosomal RNA large subunit methyltransferase H of Lactobacillus johnsonii (strain CNCM I-12250 / La1 / NCC 533).